The sequence spans 333 residues: Phosphoribosylformylglycinamidine cyclo-ligase (333 aa).

Belongs to the AIR synthase family.

It is found in the cytoplasm. The catalysed reaction is 2-formamido-N(1)-(5-O-phospho-beta-D-ribosyl)acetamidine + ATP = 5-amino-1-(5-phospho-beta-D-ribosyl)imidazole + ADP + phosphate + H(+). It participates in purine metabolism; IMP biosynthesis via de novo pathway; 5-amino-1-(5-phospho-D-ribosyl)imidazole from N(2)-formyl-N(1)-(5-phospho-D-ribosyl)glycinamide: step 2/2. This chain is Phosphoribosylformylglycinamidine cyclo-ligase, found in Methanococcoides burtonii (strain DSM 6242 / NBRC 107633 / OCM 468 / ACE-M).